The sequence spans 2820 residues: Neurofibromin (2820 aa).

The residue at position 2 (Ala-2) is an N-acetylalanine. Phosphoserine occurs at positions 866 and 878. The 211-residue stretch at His-1253–Ile-1463 folds into the Ras-GAP domain. The 159-residue stretch at Glu-1561–Lys-1719 folds into the CRAL-TRIO domain. The segment at Glu-1561–Asp-1818 is lipid binding. Phosphoserine occurs at positions 2169 and 2448. A disordered region spans residues Tyr-2457 to Glu-2482. A compositionally biased stretch (basic and acidic residues) spans Pro-2458–Lys-2470. Phosphothreonine is present on Thr-2495. 4 positions are modified to phosphoserine: Ser-2496, Ser-2502, Ser-2504, and Ser-2524. The Bipartite nuclear localization signal signature appears at Lys-2536–Arg-2552. Position 2546 is a phosphothreonine (Thr-2546). A phosphoserine mark is found at Ser-2578, Ser-2783, and Ser-2798. The interval Thr-2768–Val-2820 is disordered. Residues Leu-2782–Ala-2808 are compositionally biased toward polar residues.

As to quaternary structure, interacts with HTR6. Interacts with SPRED2. Ubiquitinated by RNF7/RBX2, leading to its degradation.

It is found in the nucleus. The protein resides in the nucleolus. The protein localises to the cell membrane. Functionally, stimulates the GTPase activity of Ras. NF1 shows greater affinity for Ras GAP, but lower specific activity. May be a regulator of Ras activity. The polypeptide is Neurofibromin (Nf1) (Rattus norvegicus (Rat)).